A 313-amino-acid chain; its full sequence is Heterogeneous nuclear ribonucleoproteins C1/C2 (313 aa).

An N-acetylalanine modification is found at A2. Residues K8, K50, K89, and K94 each participate in a glycyl lysine isopeptide (Lys-Gly) (interchain with G-Cter in SUMO2) cross-link. In terms of domain architecture, RRM spans S16–E87. A phosphoserine mark is found at S113, S115, and S121. Disordered stretches follow at residues Y139–G191 and E219–S313. Residues P155 to V161 carry the Nuclear localization signal motif. Phosphoserine occurs at positions 162 and 166. Residues S175–S186 are compositionally biased toward low complexity. At K176 the chain carries N6-acetyllysine; alternate. K176 participates in a covalent cross-link: Glycyl lysine isopeptide (Lys-Gly) (interchain with G-Cter in SUMO2); alternate. Residues G191–A226 are a coiled coil. A Glycyl lysine isopeptide (Lys-Gly) (interchain with G-Cter in SUMO2) cross-link involves residue K224. Phosphoserine is present on residues S229, S231, and S232. A Glycyl lysine isopeptide (Lys-Gly) (interchain with G-Cter in SUMO2) cross-link involves residue K237. A Glycyl lysine isopeptide (Lys-Gly) (interchain with G-Cter in SUMO2); alternate cross-link involves residue K240. K240 participates in a covalent cross-link: Glycyl lysine isopeptide (Lys-Gly) (interchain with G-Cter in SUMO1); alternate. Residues S241, S246, S247, and S249 each carry the phosphoserine modification. The segment covering V250 to S261 has biased composition (basic and acidic residues). Residues K251 and K252 each participate in a glycyl lysine isopeptide (Lys-Gly) (interchain with G-Cter in SUMO2) cross-link. K258 participates in a covalent cross-link: Glycyl lysine isopeptide (Lys-Gly) (interchain with G-Cter in SUMO2); alternate. K258 participates in a covalent cross-link: Glycyl lysine isopeptide (Lys-Gly) (interchain with G-Cter in SUMO); alternate. A phosphoserine mark is found at S261 and S268. Acidic residues predominate over residues A263–G284. The span at D285–E294 shows a compositional bias: basic and acidic residues. The span at K295–S313 shows a compositional bias: acidic residues. Residues S306 and S313 each carry the phosphoserine modification.

This sequence belongs to the RRM HNRPC family. RALY subfamily. In terms of assembly, tetramer composed of 3 copies of isoform C1 and 1 copy of isoform C2. Assembly of 3 tetramers with bound pre-mRNA gives rise to a 19S complex that interacts with HNRNPA2B1 tetramers. Component of the 40S hnRNP particle. Identified in the spliceosome C complex. Interacts with IGF2BP1. Interacts with DHX9; this interaction is direct, enhanced probably by their concomitant binding to RNA and mediates the attachment to actin filaments. Interacts with PPIA/CYPA. Post-translationally, phosphorylated on Ser-268 and Ser-306 in resting cells. Sumoylated. Sumoylation reduces affinity for mRNA. In terms of processing, ubiquitinated and degraded after nucleo-cytoplasmic transport by YWHAE.

The protein resides in the nucleus. In terms of biological role, binds pre-mRNA and nucleates the assembly of 40S hnRNP particles. Interacts with poly-U tracts in the 3'-UTR or 5'-UTR of mRNA and modulates the stability and the level of translation of bound mRNA molecules. Single HNRNPC tetramers bind 230-240 nucleotides. Trimers of HNRNPC tetramers bind 700 nucleotides. May play a role in the early steps of spliceosome assembly and pre-mRNA splicing. N6-methyladenosine (m6A) has been shown to alter the local structure in mRNAs and long non-coding RNAs (lncRNAs) via a mechanism named 'm(6)A-switch', facilitating binding of HNRNPC, leading to regulation of mRNA splicing. This chain is Heterogeneous nuclear ribonucleoproteins C1/C2 (Hnrnpc), found in Mus musculus (Mouse).